The sequence spans 422 residues: Histidine--tRNA ligase (422 aa).

The protein belongs to the class-II aminoacyl-tRNA synthetase family. As to quaternary structure, homodimer.

Its subcellular location is the cytoplasm. The enzyme catalyses tRNA(His) + L-histidine + ATP = L-histidyl-tRNA(His) + AMP + diphosphate + H(+). The sequence is that of Histidine--tRNA ligase from Vesicomyosocius okutanii subsp. Calyptogena okutanii (strain HA).